A 449-amino-acid chain; its full sequence is Ribosomal protein uS12 methylthiotransferase RimO (449 aa).

The 111-residue stretch at 15 to 125 (PRISFVSLGC…VLAAVHEAVP (111 aa)) folds into the MTTase N-terminal domain. [4Fe-4S] cluster-binding residues include C24, C60, C89, C156, C160, and C163. The Radical SAM core domain occupies 142 to 379 (LTPRHYAYLK…MRTQQKVSAR (238 aa)). Residues 382–448 (KRKVGTRQSV…PYDLSGTAVG (67 aa)) form the TRAM domain.

It belongs to the methylthiotransferase family. RimO subfamily. It depends on [4Fe-4S] cluster as a cofactor.

It is found in the cytoplasm. The enzyme catalyses L-aspartate(89)-[ribosomal protein uS12]-hydrogen + (sulfur carrier)-SH + AH2 + 2 S-adenosyl-L-methionine = 3-methylsulfanyl-L-aspartate(89)-[ribosomal protein uS12]-hydrogen + (sulfur carrier)-H + 5'-deoxyadenosine + L-methionine + A + S-adenosyl-L-homocysteine + 2 H(+). In terms of biological role, catalyzes the methylthiolation of an aspartic acid residue of ribosomal protein uS12. The protein is Ribosomal protein uS12 methylthiotransferase RimO of Xanthobacter autotrophicus (strain ATCC BAA-1158 / Py2).